The chain runs to 138 residues: MRTLWIMAVLLVGVEGDLWQFGQMILKETGKLPFPYYTTYGCYCGWGGQGQPKDATDRCCFVHDCCYGKLTNCKPKTDRYSYSRENGVIICGEGTPCEKQICECDKAAAVCFRENLRTYKKRYMAYPDVLCKKPAEKC.

A signal peptide spans 1 to 16; the sequence is MRTLWIMAVLLVGVEG. 7 cysteine pairs are disulfide-bonded: Cys-42-Cys-131, Cys-44-Cys-60, Cys-59-Cys-111, Cys-65-Cys-138, Cys-66-Cys-104, Cys-73-Cys-97, and Cys-91-Cys-102. Residues 121–133 form an important for membrane-damaging activities in eukaryotes and bacteria; heparin-binding region; it reads KRYMAYPDVLCKK.

This sequence belongs to the phospholipase A2 family. Group II subfamily. D49 sub-subfamily. As to quaternary structure, homodimer; non-covalently linked (probable alternative/compact dimer conformation). Expressed by the venom gland.

Its subcellular location is the secreted. Functionally, snake venom phospholipase A2 (PLA2) that shows low enzymatic activity even tough it conserves the catalytic residues. Shows a strong myotoxic activity and induces indirect hemolysis, anticoagulant properties, and cytotoxic activities. In vivo, it induces muscle necrosis, accompanied by polymorphonuclear cell infiltration, and edema in the mouse paw. It exerts its function even in the absence of extracellular calcium, indicating it is not a calcium-dependent enzyme. A model of myotoxic mechanism has been proposed: an apo Lys49-PLA2 is activated by the entrance of a hydrophobic molecule (e.g. fatty acid) at the hydrophobic channel of the protein leading to a reorientation of a monomer. This reorientation causes a transition between 'inactive' to 'active' states, causing alignment of C-terminal and membrane-docking sites (MDoS) side-by-side and putting the membrane-disruption sites (MDiS) in the same plane, exposed to solvent and in a symmetric position for both monomers. The MDoS region stabilizes the toxin on membrane by the interaction of charged residues with phospholipid head groups. Subsequently, the MDiS region destabilizes the membrane with penetration of hydrophobic residues. This insertion causes a disorganization of the membrane, allowing an uncontrolled influx of ions (i.e. calcium and sodium), and eventually triggering irreversible intracellular alterations and cell death. The sequence is that of Basic phospholipase A2 homolog bothropstoxin-II from Bothrops jararacussu (Jararacussu).